The primary structure comprises 402 residues: Multidrug resistance protein MdtH (402 aa).

11 consecutive transmembrane segments (helical) span residues tyrosine 13–isoleucine 33, serine 34–leucine 54, proline 99–phenylalanine 116, isoleucine 139–leucine 159, leucine 165–leucine 185, valine 214–methionine 234, alanine 243–isoleucine 263, leucine 277–leucine 297, leucine 300–threonine 320, leucine 340–glycine 360, and proline 369–serine 389.

Belongs to the major facilitator superfamily. DHA1 family. MdtH (TC 2.A.1.2.21) subfamily.

It is found in the cell inner membrane. The sequence is that of Multidrug resistance protein MdtH from Klebsiella pneumoniae subsp. pneumoniae (strain ATCC 700721 / MGH 78578).